The chain runs to 55 residues: Myrmicitoxin(1)-Pr6b (55 aa).

Positions 1–22 (MKIIYAFLLIAVVAFMGSGIMA) are cleaved as a signal peptide. Residues 23–29 (ESLAEAI) constitute a propeptide that is removed on maturation.

This sequence belongs to the formicidae venom clade 4 family. In terms of tissue distribution, expressed by the venom gland.

Its subcellular location is the secreted. Its function is as follows. Probable neurotoxin. The chain is Myrmicitoxin(1)-Pr6b from Pogonomyrmex rugosus (Desert harvester ant).